Here is a 414-residue protein sequence, read N- to C-terminus: Histidine--tRNA ligase (414 aa).

This sequence belongs to the class-II aminoacyl-tRNA synthetase family. Homodimer.

Its subcellular location is the cytoplasm. The catalysed reaction is tRNA(His) + L-histidine + ATP = L-histidyl-tRNA(His) + AMP + diphosphate + H(+). The chain is Histidine--tRNA ligase from Ehrlichia ruminantium (strain Gardel).